We begin with the raw amino-acid sequence, 86 residues long: Putative membrane protein insertion efficiency factor (86 aa).

The interval 66 to 86 (FSKGGFDPVPPHDGVPGKKED) is disordered.

Belongs to the UPF0161 family.

The protein resides in the cell inner membrane. Functionally, could be involved in insertion of integral membrane proteins into the membrane. In Chlorobium luteolum (strain DSM 273 / BCRC 81028 / 2530) (Pelodictyon luteolum), this protein is Putative membrane protein insertion efficiency factor.